The chain runs to 335 residues: MSLPSIKTTNSYCVVLWCDQGSATINAPDRVVQVMAGDVVLAPHGAFVTGHGVVLPMAFPDFDGGEHTRRLHMGTAWSKRMIFEFSRSLLGETRPSECIAALFDDRARPPRVPEPQAARKVAQKLIAYPADQTPLLEFAQLHNISSRTLQRQFVASTGFTFSEWRAALRVSVAADLLAHDFRIGQVSQMVGFSATSSLTRAFKRHTGDTPSSFTSPRMHAVCEQQPPMIPATTTFARASDDIALWIYSGTATVTTPGYCRFMGAGETVTIPSGTSTRLDVSAGSVALPVPLAAAHDDLTLSDVLAASVNPLAAVELQRLSAQERADVEQVLVPSV.

Positions 119–216 (RKVAQKLIAY…GDTPSSFTSP (98 aa)) constitute an HTH araC/xylS-type domain. 2 DNA-binding regions (H-T-H motif) span residues 136-157 (LEFA…VAST) and 183-206 (IGQV…KRHT).

In terms of biological role, under iron limitation, represses the acn (aconitase), catA (catechol 1,2 dioxygenase), leuCD (isopropylmalate dehydratase), narKGHJI (nitrite/nitrate transporter and nitrate reductase), sdhCAB (succinate dehydrogenase), pta (phosphotransacetylase) and katA (catalase) genes. This Corynebacterium diphtheriae (strain ATCC 700971 / NCTC 13129 / Biotype gravis) protein is HTH-type transcriptional regulator RipA.